We begin with the raw amino-acid sequence, 308 residues long: D-alanine--D-alanine ligase (308 aa).

The ATP-grasp domain occupies 104 to 301; sequence KQIWQGSDLP…FDELCVAILE (198 aa). Residue 130 to 185 coordinates ATP; it reads IAELGLPVIIKPVHEGSSVGMSKVEKAEDFAAAIEKATQHDAVVMAEKWITGREFT. Mg(2+) is bound by residues D255, E268, and N270.

Belongs to the D-alanine--D-alanine ligase family. Requires Mg(2+) as cofactor. Mn(2+) is required as a cofactor.

Its subcellular location is the cytoplasm. The catalysed reaction is 2 D-alanine + ATP = D-alanyl-D-alanine + ADP + phosphate + H(+). It functions in the pathway cell wall biogenesis; peptidoglycan biosynthesis. Cell wall formation. The protein is D-alanine--D-alanine ligase of Acinetobacter baumannii (strain ACICU).